Consider the following 375-residue polypeptide: Probable mitochondrial tRNA-specific 2-thiouridylase 1 (375 aa).

ATP-binding positions include 7 to 14 (GMSGGVDS) and methionine 33. Residues 94-96 (VPD) are interaction with target base in tRNA. Residue cysteine 99 is the Nucleophile of the active site. An intrachain disulfide couples cysteine 99 to cysteine 205. ATP is bound at residue glycine 124. The interaction with tRNA stretch occupies residues 154–156 (KDQ). Residue cysteine 205 is the Cysteine persulfide intermediate of the active site. Residues 319–320 (QR) form an interaction with tRNA region.

It belongs to the MnmA/TRMU family.

The protein localises to the mitochondrion. The catalysed reaction is 5-taurinomethyluridine(34) in tRNA + S-sulfanyl-L-cysteinyl-[protein] + AH2 + ATP = 5-taurinomethyl-2-thiouridine(34) in tRNA + L-cysteinyl-[protein] + A + AMP + diphosphate + H(+). Its function is as follows. Catalyzes the 2-thiolation of uridine at the wobble position (U34) of mitochondrial tRNA(Lys), tRNA(Glu) and tRNA(Gln). Required for the formation of 5-taurinomethyl-2-thiouridine (tm5s2U) of mitochondrial tRNA(Lys), tRNA(Glu), and tRNA(Gln) at the wobble position. ATP is required to activate the C2 atom of the wobble base. The polypeptide is Probable mitochondrial tRNA-specific 2-thiouridylase 1 (Caenorhabditis elegans).